A 321-amino-acid polypeptide reads, in one-letter code: L-carnitine dehydrogenase (321 aa).

14 to 19 is an NAD(+) binding site; that stretch reads GSGVIG. Residues 317-321 form an important for catalytic activity region; that stretch reads MTFSE.

The protein belongs to the 3-hydroxyacyl-CoA dehydrogenase family. L-carnitine dehydrogenase subfamily. Homodimer.

The protein localises to the cytoplasm. The catalysed reaction is carnitine + NAD(+) = 3-dehydrocarnitine + NADH + H(+). Its pathway is amine and polyamine metabolism; carnitine metabolism. The enzyme activity is strongly inhibited by Ag(+), Ni(+), Hg(+), and p-chloromercuribenzoate, and partially inhibited by Li(+), Ca(2+), Mn(2+), Co(2+), Cu(2+), and Zn(2+). Its function is as follows. Catalyzes the NAD(+)-dependent oxidation of L-carnitine to 3-dehydrocarnitine. Is specific for L-carnitine and NAD(+) as substrates since D-carnitine, other carnitine analogs such as choline and betaine, and NADP(+) are not substrates. Despite a high similarity to 3-hydroxyacyl-CoA dehydrogenases, cannot dehydrogenate 3-hydroxybutylate and 3-hydroxybutyl-CoA. Is probably involved in a L-carnitine degradation pathway that allows Pseudomonas sp. strain NBRC 13558 to grow on L-carnitine as the sole source of carbon and nitrogen. The protein is L-carnitine dehydrogenase of Pseudomonas sp.